A 291-amino-acid chain; its full sequence is Porphobilinogen deaminase (291 aa).

Cys237 carries the S-(dipyrrolylmethanemethyl)cysteine modification.

It belongs to the HMBS family. In terms of assembly, monomer. Dipyrromethane serves as cofactor.

It catalyses the reaction 4 porphobilinogen + H2O = hydroxymethylbilane + 4 NH4(+). It participates in porphyrin-containing compound metabolism; protoporphyrin-IX biosynthesis; coproporphyrinogen-III from 5-aminolevulinate: step 2/4. In terms of biological role, tetrapolymerization of the monopyrrole PBG into the hydroxymethylbilane pre-uroporphyrinogen in several discrete steps. The protein is Porphobilinogen deaminase of Clostridium acetobutylicum (strain ATCC 824 / DSM 792 / JCM 1419 / IAM 19013 / LMG 5710 / NBRC 13948 / NRRL B-527 / VKM B-1787 / 2291 / W).